We begin with the raw amino-acid sequence, 1235 residues long: Cullin-associated NEDD8-dissociated protein 2 (1235 aa).

Serine 2 carries the post-translational modification N-acetylserine. 26 HEAT repeats span residues 2–39, 44–81, 83–119, 129–167, 171–208, 210–246, 254–291, 326–367, 371–408, 431–468, 516–553, 564–603, 607–644, 647–684, 689–726, 730–769, 771–812, 856–893, 895–930, 932–965, 966–1002, 1006–1043, 1047–1083, 1104–1140, 1156–1193, and 1203–1235; these read STGA…KDSI, DSER…KVKE, QVEN…ELPP, NVCR…RLGA, TFHA…ACST, LFVE…SVGR, AHLD…KCPK, TEDS…SRPD, DFHC…HTRP, AQVP…VLPG, PHLP…TLWP, PYVG…HLGD, DDLE…LRLD, PILA…SQGL, PAVR…TQPS, EVSG…TRPP, VEYS…ALSA, GPQR…GNLP, FLPF…DNLK, YVED…LVFV, NPPY…DQPH, PLLK…NKPS, DLLD…DDGL, LDMC…LCPA, TCTA…NPEV, and SAQI…MELS. The interval 314 to 345 is disordered; it reads YDHDSDDEEQMETEDSEFSEQESEDEYSDDDD. Residues 317-345 show a composition bias toward acidic residues; that stretch reads DSDDEEQMETEDSEFSEQESEDEYSDDDD.

The protein belongs to the CAND family. As to quaternary structure, binds TBP, CNOT3 and UBE3C. In terms of processing, ubiquitinated and targeted for proteasomal degradation. Highly expressed in embryonic limb buds.

It localises to the nucleus. Probable assembly factor of SCF (SKP1-CUL1-F-box protein) E3 ubiquitin ligase complexes that promotes the exchange of the substrate-recognition F-box subunit in SCF complexes, thereby playing a key role in the cellular repertoire of SCF complexes. The polypeptide is Cullin-associated NEDD8-dissociated protein 2 (Cand2) (Mus musculus (Mouse)).